The sequence spans 369 residues: Protein RecA (369 aa).

Residue G66–T73 coordinates ATP. The disordered stretch occupies residues G328 to K369. Over residues D339–K369 the composition is skewed to basic and acidic residues.

Belongs to the RecA family.

Its subcellular location is the cytoplasm. Functionally, can catalyze the hydrolysis of ATP in the presence of single-stranded DNA, the ATP-dependent uptake of single-stranded DNA by duplex DNA, and the ATP-dependent hybridization of homologous single-stranded DNAs. It interacts with LexA causing its activation and leading to its autocatalytic cleavage. The protein is Protein RecA of Lactobacillus delbrueckii subsp. bulgaricus (strain ATCC BAA-365 / Lb-18).